The primary structure comprises 72 residues: Large ribosomal subunit protein bL28 (72 aa).

This sequence belongs to the bacterial ribosomal protein bL28 family.

This chain is Large ribosomal subunit protein bL28, found in Pelodictyon phaeoclathratiforme (strain DSM 5477 / BU-1).